Reading from the N-terminus, the 217-residue chain is External core antigen (217 aa).

An N-terminal signal peptide occupies residues 1-19; sequence MYLFHLCLVFACVPCPTFQ. Residues 26–28 form an HBEAG region; it reads GWL. Residues 180–217 form a disordered region; that stretch reads RRGGARASRSPRRRTPSPRRRRSQSPRRRRSQSPSANC. The segment covering 188 to 210 has biased composition (basic residues); that stretch reads RSPRRRTPSPRRRRSQSPRRRRS. A 1; half-length repeat occupies 189–195; the sequence is SPRRRTP. Positions 189 to 211 are 3 X 8 AA repeats of S-P-R-R-R-R-S-Q; the sequence is SPRRRTPSPRRRRSQSPRRRRSQ. A propeptide spanning residues 189–217 is cleaved from the precursor; the sequence is SPRRRTPSPRRRRSQSPRRRRSQSPSANC. 2 tandem repeats follow at residues 196 to 203 and 204 to 211.

This sequence belongs to the orthohepadnavirus precore antigen family. As to quaternary structure, homodimerizes. Phosphorylated. Post-translationally, cleaved by host furin.

The protein localises to the secreted. It localises to the host nucleus. In terms of biological role, may regulate immune response to the intracellular capsid in acting as a T-cell tolerogen, by having an immunoregulatory effect which prevents destruction of infected cells by cytotoxic T-cells. This immune regulation may predispose to chronicity during perinatal infections and prevent severe liver injury during adult infections. This Marmota monax (Woodchuck) protein is External core antigen.